Consider the following 314-residue polypeptide: Aspartate carbamoyltransferase catalytic subunit (314 aa).

The carbamoyl phosphate site is built by Arg-64 and Thr-65. Lys-92 is an L-aspartate binding site. The carbamoyl phosphate site is built by Arg-114, His-142, and Gln-145. Positions 175 and 230 each coordinate L-aspartate. Carbamoyl phosphate is bound by residues Gly-271 and Pro-272.

This sequence belongs to the aspartate/ornithine carbamoyltransferase superfamily. ATCase family. Heterododecamer (2C3:3R2) of six catalytic PyrB chains organized as two trimers (C3), and six regulatory PyrI chains organized as three dimers (R2).

It catalyses the reaction carbamoyl phosphate + L-aspartate = N-carbamoyl-L-aspartate + phosphate + H(+). The protein operates within pyrimidine metabolism; UMP biosynthesis via de novo pathway; (S)-dihydroorotate from bicarbonate: step 2/3. Its function is as follows. Catalyzes the condensation of carbamoyl phosphate and aspartate to form carbamoyl aspartate and inorganic phosphate, the committed step in the de novo pyrimidine nucleotide biosynthesis pathway. The polypeptide is Aspartate carbamoyltransferase catalytic subunit (Deinococcus radiodurans (strain ATCC 13939 / DSM 20539 / JCM 16871 / CCUG 27074 / LMG 4051 / NBRC 15346 / NCIMB 9279 / VKM B-1422 / R1)).